A 113-amino-acid polypeptide reads, in one-letter code: Integration host factor subunit alpha (113 aa).

The disordered stretch occupies residues 87-113 (NALNGEVSDETTEGADDDDDEEGEGDE). Residues 93 to 113 (VSDETTEGADDDDDEEGEGDE) are compositionally biased toward acidic residues.

The protein belongs to the bacterial histone-like protein family. As to quaternary structure, heterodimer of an alpha and a beta chain.

Its function is as follows. This protein is one of the two subunits of integration host factor, a specific DNA-binding protein that functions in genetic recombination as well as in transcriptional and translational control. This is Integration host factor subunit alpha from Anaeromyxobacter dehalogenans (strain 2CP-1 / ATCC BAA-258).